The sequence spans 58 residues: Photosystem II reaction center X protein (58 aa).

The helical transmembrane segment at 27 to 47 (IGSFLAAAAFIVVPAASFLIW) threads the bilayer.

This sequence belongs to the PsbX family. Type 2 subfamily. As to quaternary structure, PSII consists of a core antenna complex that captures photons, and an electron transfer chain that converts photonic excitation into a charge separation. PSII forms dimeric complexes.

It is found in the cellular thylakoid membrane. Functionally, involved in the binding and/or turnover of quinones at the Q(B) site of Photosystem II. The chain is Photosystem II reaction center X protein from Prochlorococcus marinus (strain MIT 9211).